Reading from the N-terminus, the 344-residue chain is Phosphoribosylformylglycinamidine cyclo-ligase (344 aa).

This sequence belongs to the AIR synthase family.

It localises to the cytoplasm. The enzyme catalyses 2-formamido-N(1)-(5-O-phospho-beta-D-ribosyl)acetamidine + ATP = 5-amino-1-(5-phospho-beta-D-ribosyl)imidazole + ADP + phosphate + H(+). The protein operates within purine metabolism; IMP biosynthesis via de novo pathway; 5-amino-1-(5-phospho-D-ribosyl)imidazole from N(2)-formyl-N(1)-(5-phospho-D-ribosyl)glycinamide: step 2/2. The sequence is that of Phosphoribosylformylglycinamidine cyclo-ligase from Haemophilus influenzae (strain PittGG).